The following is a 136-amino-acid chain: Large ribosomal subunit protein uL16 (136 aa).

Belongs to the universal ribosomal protein uL16 family. As to quaternary structure, part of the 50S ribosomal subunit.

Functionally, binds 23S rRNA and is also seen to make contacts with the A and possibly P site tRNAs. This is Large ribosomal subunit protein uL16 from Edwardsiella ictaluri (strain 93-146).